Here is an 88-residue protein sequence, read N- to C-terminus: Large ribosomal subunit protein eL31 (88 aa).

This sequence belongs to the eukaryotic ribosomal protein eL31 family.

This Methanoregula boonei (strain DSM 21154 / JCM 14090 / 6A8) protein is Large ribosomal subunit protein eL31.